Reading from the N-terminus, the 339-residue chain is Phosphate acyltransferase (339 aa).

It belongs to the PlsX family. Homodimer. Probably interacts with PlsY.

The protein localises to the cytoplasm. It carries out the reaction a fatty acyl-[ACP] + phosphate = an acyl phosphate + holo-[ACP]. The protein operates within lipid metabolism; phospholipid metabolism. In terms of biological role, catalyzes the reversible formation of acyl-phosphate (acyl-PO(4)) from acyl-[acyl-carrier-protein] (acyl-ACP). This enzyme utilizes acyl-ACP as fatty acyl donor, but not acyl-CoA. This is Phosphate acyltransferase from Helicobacter pylori (strain Shi470).